The following is a 301-amino-acid chain: Glycine--tRNA ligase alpha subunit (301 aa).

The protein belongs to the class-II aminoacyl-tRNA synthetase family. In terms of assembly, tetramer of two alpha and two beta subunits.

The protein localises to the cytoplasm. It carries out the reaction tRNA(Gly) + glycine + ATP = glycyl-tRNA(Gly) + AMP + diphosphate. This is Glycine--tRNA ligase alpha subunit from Variovorax paradoxus (strain S110).